The primary structure comprises 609 residues: Glutamine--fructose-6-phosphate aminotransferase [isomerizing] (609 aa).

The active-site Nucleophile; for GATase activity is the Cys2. Residues Cys2 to Arg218 enclose the Glutamine amidotransferase type-2 domain. SIS domains lie at Ala286–Val426 and Leu458–Pro599. The active-site For Fru-6P isomerization activity is Lys604.

In terms of assembly, homodimer.

The protein resides in the cytoplasm. The catalysed reaction is D-fructose 6-phosphate + L-glutamine = D-glucosamine 6-phosphate + L-glutamate. Functionally, catalyzes the first step in hexosamine metabolism, converting fructose-6P into glucosamine-6P using glutamine as a nitrogen source. This Photorhabdus laumondii subsp. laumondii (strain DSM 15139 / CIP 105565 / TT01) (Photorhabdus luminescens subsp. laumondii) protein is Glutamine--fructose-6-phosphate aminotransferase [isomerizing].